A 257-amino-acid polypeptide reads, in one-letter code: Alkaline phosphatase synthesis transcriptional regulatory protein SphR (257 aa).

The 124-residue stretch at 25–148 (RILVVEDEAV…ELVARCRALL (124 aa)) folds into the Response regulatory domain. Aspartate 83 carries the 4-aspartylphosphate modification. The ompR/PhoB-type DNA-binding region spans 159–257 (PAVLRYEGLK…TVRGFGYRLG (99 aa)).

In terms of processing, phosphorylated by SphS.

Member of the two-component regulatory system SphR/SphS. Response regulator. Involved in inducible production of alkaline phosphatase in response to phosphate limitation as it is directly involved in the regulation of phoA transcription in response to phosphate limitation. Binds to two distinct sites upstream from the phoA promoter. This chain is Alkaline phosphatase synthesis transcriptional regulatory protein SphR (sphR), found in Synechococcus elongatus (strain ATCC 33912 / PCC 7942 / FACHB-805) (Anacystis nidulans R2).